A 325-amino-acid polypeptide reads, in one-letter code: Secreted RxLR effector protein RXLR-C07 (325 aa).

A signal peptide spans 1-19; that stretch reads MQGVRITILWCIVLATIYA. 5 TPR repeats span residues 37–75, 92–125, 134–167, 218–251, and 260–293; these read RGLR…GEER, AQIL…IEKI, GLSL…VKKG, AELY…FLQR, and AFSL…AVSI. The RxLR-dEER signature appears at 37-75; the sequence is RGLRNAGMKANDERMFKDAIEKLRHAISLLHNRVFGEER.

It belongs to the RxLR effector family.

It localises to the secreted. Its subcellular location is the host cytoplasm. The protein localises to the host nucleus. It is found in the host nucleolus. In terms of biological role, secreted effector that suppresses pattern-triggered immunity (PTI) in plant host. The chain is Secreted RxLR effector protein RXLR-C07 from Plasmopara halstedii (Downy mildew of sunflower).